The chain runs to 396 residues: Aldo-keto reductase ausK (396 aa).

Position 76 (Asp76) interacts with NADP(+). The active-site Proton donor is Tyr81. His156 is a substrate binding site. NADP(+) is bound by residues 186-187 (CN), Gln212, 241-251 (DALGSGKFQSR), and 317-325 (RKIQHLHDN).

This sequence belongs to the aldo/keto reductase family. Aldo/keto reductase 2 subfamily. As to quaternary structure, homodimer.

It participates in secondary metabolite biosynthesis; terpenoid biosynthesis. Its function is as follows. Aldo-keto reductase; part of the gene cluster that mediates the biosynthesis of calidodehydroaustin, a fungal meroterpenoid. The first step of the pathway is the synthesis of 3,5-dimethylorsellinic acid by the polyketide synthase ausA. 3,5-dimethylorsellinic acid is then prenylated by the polyprenyl transferase ausN. Further epoxidation by the FAD-dependent monooxygenase ausM and cyclization by the probable terpene cyclase ausL lead to the formation of protoaustinoid A. Protoaustinoid A is then oxidized to spiro-lactone preaustinoid A3 by the combined action of the FAD-binding monooxygenases ausB and ausC, and the dioxygenase ausE. Acid-catalyzed keto-rearrangement and ring contraction of the tetraketide portion of preaustinoid A3 by ausJ lead to the formation of preaustinoid A4. The aldo-keto reductase ausK, with the help of ausH, is involved in the next step by transforming preaustinoid A4 into isoaustinone which is in turn hydroxylated by the P450 monooxygenase ausI to form austinolide. The cytochrome P450 monooxygenase ausG modifies austinolide to austinol. Austinol is further acetylated to austin by the O-acetyltransferase ausP, which spontaneously changes to dehydroaustin. The cytochrome P450 monooxygenase ausR then converts dehydroaustin is into 7-dehydrodehydroaustin. The hydroxylation catalyzed by ausR permits the O-acetyltransferase ausQ to add an additional acetyl group to the molecule, leading to the formation of acetoxydehydroaustin. The short chain dehydrogenase ausT catalyzes the reduction of the double bond present between carbon atoms 1 and 2 to convert 7-dehydrodehydroaustin into 1,2-dihydro-7-hydroxydehydroaustin. AusQ catalyzes not only an acetylation reaction but also the addition of the PKS ausV diketide product to 1,2-dihydro-7-hydroxydehydroaustin, forming precalidodehydroaustin. Finally, the iron/alpha-ketoglutarate-dependent dioxygenase converts precalidodehydroaustin into calidodehydroaustin. The chain is Aldo-keto reductase ausK from Aspergillus calidoustus.